The chain runs to 232 residues: A-type ATP synthase subunit D (232 aa).

The protein belongs to the V-ATPase D subunit family. Has multiple subunits with at least A(3), B(3), C, D, E, F, H, I and proteolipid K(x).

Its subcellular location is the cell membrane. Its function is as follows. Component of the A-type ATP synthase that produces ATP from ADP in the presence of a proton gradient across the membrane. This is A-type ATP synthase subunit D from Methanopyrus kandleri (strain AV19 / DSM 6324 / JCM 9639 / NBRC 100938).